The sequence spans 354 residues: Thiamine thiazole synthase 2, chloroplastic (354 aa).

The transit peptide at 1 to 44 (MATTAASSLLKSSFAGSRLPSATRTTTPSSVAVATPRAGGGPIR) directs the protein to the chloroplast. Positions 17–49 (SRLPSATRTTTPSSVAVATPRAGGGPIRASISS) are disordered. Positions 20–32 (PSATRTTTPSSVA) are enriched in polar residues. Substrate is bound by residues Ala-97, 117–118 (EQ), Gly-125, and Val-190. Cys-219 carries the 2,3-didehydroalanine (Cys) modification. Residues Asp-221, His-236, Met-288, and 298 to 300 (RMG) each bind substrate.

Belongs to the THI4 family. Homooctamer. Requires Fe cation as cofactor. In terms of processing, during the catalytic reaction, a sulfide is transferred from Cys-219 to a reaction intermediate, generating a dehydroalanine residue. In terms of tissue distribution, highest expression in developing embryos and green leaves and a very low level expression seen in endosperm, roots, etiolated shoots and immature ears.

The protein localises to the plastid. The protein resides in the chloroplast. It catalyses the reaction [ADP-thiazole synthase]-L-cysteine + glycine + NAD(+) = [ADP-thiazole synthase]-dehydroalanine + ADP-5-ethyl-4-methylthiazole-2-carboxylate + nicotinamide + 3 H2O + 2 H(+). Its function is as follows. Involved in biosynthesis of the thiamine precursor thiazole. Catalyzes the conversion of NAD and glycine to adenosine diphosphate 5-(2-hydroxyethyl)-4-methylthiazole-2-carboxylic acid (ADT), an adenylated thiazole intermediate. The reaction includes an iron-dependent sulfide transfer from a conserved cysteine residue of the protein to a thiazole intermediate. The enzyme can only undergo a single turnover, which suggests it is a suicide enzyme. May have additional roles in adaptation to various stress conditions and in DNA damage tolerance. The chain is Thiamine thiazole synthase 2, chloroplastic from Zea mays (Maize).